Reading from the N-terminus, the 413-residue chain is Tyrosine--tRNA ligase (413 aa).

Residues 60–69 (PTAPDIHIGH) carry the 'HIGH' region motif. Positions 244-248 (KMSKS) match the 'KMSKS' region motif. Position 247 (Lys-247) interacts with ATP. One can recognise an S4 RNA-binding domain in the interval 352-412 (LGIAQLLKQA…GKRRFARVTL (61 aa)).

The protein belongs to the class-I aminoacyl-tRNA synthetase family. TyrS type 2 subfamily. Homodimer.

It localises to the cytoplasm. The enzyme catalyses tRNA(Tyr) + L-tyrosine + ATP = L-tyrosyl-tRNA(Tyr) + AMP + diphosphate + H(+). Its function is as follows. Catalyzes the attachment of tyrosine to tRNA(Tyr) in a two-step reaction: tyrosine is first activated by ATP to form Tyr-AMP and then transferred to the acceptor end of tRNA(Tyr). The sequence is that of Tyrosine--tRNA ligase from Cupriavidus pinatubonensis (strain JMP 134 / LMG 1197) (Cupriavidus necator (strain JMP 134)).